The following is a 236-amino-acid chain: Ubiquinone biosynthesis O-methyltransferase (236 aa).

4 residues coordinate S-adenosyl-L-methionine: R40, G59, D80, and L124.

It belongs to the methyltransferase superfamily. UbiG/COQ3 family.

The catalysed reaction is a 3-demethylubiquinol + S-adenosyl-L-methionine = a ubiquinol + S-adenosyl-L-homocysteine + H(+). It catalyses the reaction a 3-(all-trans-polyprenyl)benzene-1,2-diol + S-adenosyl-L-methionine = a 2-methoxy-6-(all-trans-polyprenyl)phenol + S-adenosyl-L-homocysteine + H(+). It participates in cofactor biosynthesis; ubiquinone biosynthesis. In terms of biological role, O-methyltransferase that catalyzes the 2 O-methylation steps in the ubiquinone biosynthetic pathway. The protein is Ubiquinone biosynthesis O-methyltransferase of Nitrosococcus oceani (strain ATCC 19707 / BCRC 17464 / JCM 30415 / NCIMB 11848 / C-107).